The following is a 141-amino-acid chain: Hemoglobin subunit alpha (141 aa).

One can recognise a Globin domain in the interval 1–141; it reads VLSSKDKANI…VSTVLTSKYR (141 aa). Serine 3 bears the Phosphoserine mark. N6-succinyllysine is present on residues lysine 7 and lysine 11. Lysine 16 is modified (N6-acetyllysine; alternate). Lysine 16 is modified (N6-succinyllysine; alternate). Position 24 is a phosphotyrosine (tyrosine 24). An N6-succinyllysine modification is found at lysine 40. Serine 49 is subject to Phosphoserine. Histidine 58 lines the O2 pocket. Position 87 (histidine 87) interacts with heme b. Phosphoserine is present on serine 102. Residue threonine 108 is modified to Phosphothreonine. Residue serine 124 is modified to Phosphoserine. Threonine 134 and threonine 137 each carry phosphothreonine. Serine 138 bears the Phosphoserine mark.

This sequence belongs to the globin family. As to quaternary structure, heterotetramer of two alpha chains and two beta chains. In terms of tissue distribution, red blood cells.

Functionally, involved in oxygen transport from the lung to the various peripheral tissues. In terms of biological role, hemopressin acts as an antagonist peptide of the cannabinoid receptor CNR1. Hemopressin-binding efficiently blocks cannabinoid receptor CNR1 and subsequent signaling. This is Hemoglobin subunit alpha (HBA) from Lama glama (Llama).